Here is a 273-residue protein sequence, read N- to C-terminus: Shikimate dehydrogenase (NADP(+)) (273 aa).

Shikimate is bound by residues Ser-14–Ser-16 and Thr-61. Lys-65 functions as the Proton acceptor in the catalytic mechanism. Asp-77 provides a ligand contact to NADP(+). Asn-86 and Asp-102 together coordinate shikimate. Residues Gly-126 to Ala-130, Asn-150 to Lys-155, and Met-213 contribute to the NADP(+) site. Tyr-215 provides a ligand contact to shikimate. Residue Gly-237 coordinates NADP(+).

This sequence belongs to the shikimate dehydrogenase family. In terms of assembly, homodimer.

It catalyses the reaction shikimate + NADP(+) = 3-dehydroshikimate + NADPH + H(+). The protein operates within metabolic intermediate biosynthesis; chorismate biosynthesis; chorismate from D-erythrose 4-phosphate and phosphoenolpyruvate: step 4/7. Its function is as follows. Involved in the biosynthesis of the chorismate, which leads to the biosynthesis of aromatic amino acids. Catalyzes the reversible NADPH linked reduction of 3-dehydroshikimate (DHSA) to yield shikimate (SA). This chain is Shikimate dehydrogenase (NADP(+)), found in Aliivibrio salmonicida (strain LFI1238) (Vibrio salmonicida (strain LFI1238)).